We begin with the raw amino-acid sequence, 499 residues long: Probable cytosol aminopeptidase (499 aa).

The Mn(2+) site is built by Lys269 and Asp274. The active site involves Lys281. The Mn(2+) site is built by Asp292, Asp351, and Glu353. Residue Arg355 is part of the active site.

Belongs to the peptidase M17 family. It depends on Mn(2+) as a cofactor.

It is found in the cytoplasm. It catalyses the reaction Release of an N-terminal amino acid, Xaa-|-Yaa-, in which Xaa is preferably Leu, but may be other amino acids including Pro although not Arg or Lys, and Yaa may be Pro. Amino acid amides and methyl esters are also readily hydrolyzed, but rates on arylamides are exceedingly low.. It carries out the reaction Release of an N-terminal amino acid, preferentially leucine, but not glutamic or aspartic acids.. Its function is as follows. Presumably involved in the processing and regular turnover of intracellular proteins. Catalyzes the removal of unsubstituted N-terminal amino acids from various peptides. The protein is Probable cytosol aminopeptidase of Actinobacillus pleuropneumoniae serotype 7 (strain AP76).